The following is a 110-amino-acid chain: Large ribosomal subunit protein uL22 (110 aa).

The protein belongs to the universal ribosomal protein uL22 family. In terms of assembly, part of the 50S ribosomal subunit.

Its function is as follows. This protein binds specifically to 23S rRNA; its binding is stimulated by other ribosomal proteins, e.g. L4, L17, and L20. It is important during the early stages of 50S assembly. It makes multiple contacts with different domains of the 23S rRNA in the assembled 50S subunit and ribosome. The globular domain of the protein is located near the polypeptide exit tunnel on the outside of the subunit, while an extended beta-hairpin is found that lines the wall of the exit tunnel in the center of the 70S ribosome. This chain is Large ribosomal subunit protein uL22, found in Bdellovibrio bacteriovorus (strain ATCC 15356 / DSM 50701 / NCIMB 9529 / HD100).